We begin with the raw amino-acid sequence, 266 residues long: Putative pyruvate, phosphate dikinase regulatory protein (266 aa).

149 to 156 (GVSRTSKT) provides a ligand contact to ADP.

This sequence belongs to the pyruvate, phosphate/water dikinase regulatory protein family. PDRP subfamily.

The enzyme catalyses N(tele)-phospho-L-histidyl/L-threonyl-[pyruvate, phosphate dikinase] + ADP = N(tele)-phospho-L-histidyl/O-phospho-L-threonyl-[pyruvate, phosphate dikinase] + AMP + H(+). It catalyses the reaction N(tele)-phospho-L-histidyl/O-phospho-L-threonyl-[pyruvate, phosphate dikinase] + phosphate + H(+) = N(tele)-phospho-L-histidyl/L-threonyl-[pyruvate, phosphate dikinase] + diphosphate. Its function is as follows. Bifunctional serine/threonine kinase and phosphorylase involved in the regulation of the pyruvate, phosphate dikinase (PPDK) by catalyzing its phosphorylation/dephosphorylation. This chain is Putative pyruvate, phosphate dikinase regulatory protein, found in Halothermothrix orenii (strain H 168 / OCM 544 / DSM 9562).